A 731-amino-acid polypeptide reads, in one-letter code: MDTSGHFHDSGVGDLDEDPKCPCPSSGDEQQQQQQQQQQQQPPPPAPPAAPQQPLGPSLQPQPPQLQQQQQQQQQQQQQQPPHPLSQLAQLQSQPVHPGLLHSSPTAFRAPPSSNSTAILHPSSRQGSQLNLNDHLLGHSPSSTATSGPGGGSRHRQASPLVHRRDSNPFTEIAMSSCKYSGGVMKPLSRLSASRRNLIEAETEGQPLQLFSPSNPPEIVISSREDNHAHQTLLHHPNATHNHQHAGTTASSTTFPKANKRKNQNIGYKLGHRRALFEKRKRLSDYALIFGMFGIVVMVIETELSWGLYSKDSMFSLALKCLISLSTIILLGLIIAYHTREVQLFVIDNGADDWRIAMTYERILYISLEMLVCAIHPIPGEYKFFWTARLAFSYTPSRAEADVDIILSIPMFLRLYLIARVMLLHSKLFTDASSRSIGALNKINFNTRFVMKTLMTICPGTVLLVFSISLWIIAAWTVRVCERYHDQQDVTSNFLGAMWLISITFLSIGYGDMVPHTYCGKGVCLLTGIMGAGCTALVVAVVARKLELTKAEKHVHNFMMDTQLTKRIKNAAANVLRETWLIYKHTKLLKKIDHAKVRKHQRKFLQAIHQLRSVKMEQRKLSDQANTLVDLSKMQNVMYDLITELNDRSEDLEKQIGSLESKLEHLTASFNSLPLLIADTLRQQQQQLLSAIIEARGVSVAVGTTHTPISDSPIGVSSTSFPTPYTSSSSC.

A compositionally biased stretch (basic and acidic residues) spans 1–11 (MDTSGHFHDSG). Disordered regions lie at residues 1 to 170 (MDTS…SNPF) and 239 to 258 (ATHN…FPKA). A compositionally biased stretch (low complexity) spans 30 to 40 (QQQQQQQQQQQ). A compositionally biased stretch (pro residues) spans 41–51 (QPPPPAPPAAP). Residues 52–95 (QQPLGPSLQPQPPQLQQQQQQQQQQQQQQPPHPLSQLAQLQSQP) show a composition bias toward low complexity. Over residues 112–132 (PSSNSTAILHPSSRQGSQLNL) the composition is skewed to polar residues. The segment covering 138-147 (GHSPSSTATS) has biased composition (low complexity). Ser167 carries the phosphoserine modification. The segment covering 239–256 (ATHNHQHAGTTASSTTFP) has biased composition (polar residues). Residues 288-308 (LIFGMFGIVVMVIETELSWGL) traverse the membrane as a helical segment. Residues 315-335 (FSLALKCLISLSTIILLGLII) form a helical membrane-spanning segment. A helical transmembrane segment spans residues 366 to 386 (ISLEMLVCAIHPIPGEYKFFW). Residues 405 to 425 (IILSIPMFLRLYLIARVMLLH) traverse the membrane as a helical segment. The helical transmembrane segment at 454–474 (LMTICPGTVLLVFSISLWIIA) threads the bilayer. An intramembrane region (pore-forming) is located at residues 494 to 514 (FLGAMWLISITFLSIGYGDMV). Residues 523 to 543 (VCLLTGIMGAGCTALVVAVVA) traverse the membrane as a helical segment. Residues 561–637 (DTQLTKRIKN…LVDLSKMQNV (77 aa)) form a calmodulin-binding region. Positions 642–669 (ITELNDRSEDLEKQIGSLESKLEHLTAS) form a coiled coil. Residues 709–731 (ISDSPIGVSSTSFPTPYTSSSSC) are disordered. Residues 717-731 (SSTSFPTPYTSSSSC) are compositionally biased toward low complexity.

This sequence belongs to the potassium channel KCNN family. KCa2.3/KCNN3 subfamily. As to quaternary structure, homodimer. Heteromultimer with KCNN2 or KCNN1; this modulates plasma membrane expression and consequently the small conductance calcium-activated potassium channel activity. The complex is composed of 4 channel subunits each of which binds to a calmodulin subunit which regulates the channel activity through calcium-binding. Interacts with CALM1. In terms of tissue distribution, widely distributed in human tissues and is present at 20-60% of KCNN3 in the brain.

The protein localises to the cell membrane. Its subcellular location is the cytoplasm. The protein resides in the myofibril. It localises to the sarcomere. It is found in the z line. The catalysed reaction is K(+)(in) = K(+)(out). Inhibited by bee venom neurotoxin apamin. Functionally, small conductance calcium-activated potassium channel that mediates the voltage-independent transmembrane transfer of potassium across the cell membrane through a constitutive interaction with calmodulin which binds the intracellular calcium allowing its opening. The current is characterized by a voltage-independent activation, an intracellular calcium concentration increase-dependent activation and a single-channel conductance of 10 picosiemens. Also presents an inwardly rectifying current, thus reducing its already small outward conductance of potassium ions, which is particularly the case when the membrane potential displays positive values, above + 20 mV. Activation is followed by membrane hyperpolarization. Thought to regulate neuronal excitability by contributing to the slow component of synaptic afterhyperpolarization. Its function is as follows. Does not function as a small conductance calcium-activated potassium channel. Selectively suppresses endogenous KCNN3 currents, in a dominant-negative fashion by decreasing the abundance of functional channels in the plasma membrane, possibly by selectively coassembling with and sequestering native KCNN3 protein in intracellular compartments. This dominant inhibitory effect extends to other members of the SK subfamily. In Homo sapiens (Human), this protein is Small conductance calcium-activated potassium channel protein 3.